A 143-amino-acid chain; its full sequence is Large ribosomal subunit protein uL11 (143 aa).

This sequence belongs to the universal ribosomal protein uL11 family. As to quaternary structure, part of the ribosomal stalk of the 50S ribosomal subunit. Interacts with L10 and the large rRNA to form the base of the stalk. L10 forms an elongated spine to which L12 dimers bind in a sequential fashion forming a multimeric L10(L12)X complex. One or more lysine residues are methylated.

In terms of biological role, forms part of the ribosomal stalk which helps the ribosome interact with GTP-bound translation factors. In Rhizobium etli (strain CIAT 652), this protein is Large ribosomal subunit protein uL11.